Here is a 289-residue protein sequence, read N- to C-terminus: Formamidopyrimidine-DNA glycosylase (289 aa).

Pro2 acts as the Schiff-base intermediate with DNA in catalysis. Catalysis depends on Glu3, which acts as the Proton donor. Catalysis depends on Lys61, which acts as the Proton donor; for beta-elimination activity. 3 residues coordinate DNA: His96, Arg115, and Lys161. The segment at 247–281 (SAYGQENLPCPRCGAPIKREKFMNRSSFSCPRCQP) adopts an FPG-type zinc-finger fold. The Proton donor; for delta-elimination activity role is filled by Arg271.

Belongs to the FPG family. As to quaternary structure, monomer. Requires Zn(2+) as cofactor.

It catalyses the reaction Hydrolysis of DNA containing ring-opened 7-methylguanine residues, releasing 2,6-diamino-4-hydroxy-5-(N-methyl)formamidopyrimidine.. The enzyme catalyses 2'-deoxyribonucleotide-(2'-deoxyribose 5'-phosphate)-2'-deoxyribonucleotide-DNA = a 3'-end 2'-deoxyribonucleotide-(2,3-dehydro-2,3-deoxyribose 5'-phosphate)-DNA + a 5'-end 5'-phospho-2'-deoxyribonucleoside-DNA + H(+). In terms of biological role, involved in base excision repair of DNA damaged by oxidation or by mutagenic agents. Acts as a DNA glycosylase that recognizes and removes damaged bases. Has a preference for oxidized purines, such as 7,8-dihydro-8-oxoguanine (8-oxoG). Has AP (apurinic/apyrimidinic) lyase activity and introduces nicks in the DNA strand. Cleaves the DNA backbone by beta-delta elimination to generate a single-strand break at the site of the removed base with both 3'- and 5'-phosphates. This is Formamidopyrimidine-DNA glycosylase from Rhodococcus erythropolis (strain PR4 / NBRC 100887).